The sequence spans 126 residues: Large ribosomal subunit protein bL12 (126 aa).

The protein belongs to the bacterial ribosomal protein bL12 family. In terms of assembly, homodimer. Part of the ribosomal stalk of the 50S ribosomal subunit. Forms a multimeric L10(L12)X complex, where L10 forms an elongated spine to which 2 to 4 L12 dimers bind in a sequential fashion. Binds GTP-bound translation factors.

Forms part of the ribosomal stalk which helps the ribosome interact with GTP-bound translation factors. Is thus essential for accurate translation. The polypeptide is Large ribosomal subunit protein bL12 (Francisella tularensis subsp. mediasiatica (strain FSC147)).